Reading from the N-terminus, the 295-residue chain is Bifunctional protein FolD (295 aa).

Residues 165-167, Ser190, and Ile231 each bind NADP(+); that span reads GRS.

Belongs to the tetrahydrofolate dehydrogenase/cyclohydrolase family. In terms of assembly, homodimer.

It catalyses the reaction (6R)-5,10-methylene-5,6,7,8-tetrahydrofolate + NADP(+) = (6R)-5,10-methenyltetrahydrofolate + NADPH. The catalysed reaction is (6R)-5,10-methenyltetrahydrofolate + H2O = (6R)-10-formyltetrahydrofolate + H(+). It functions in the pathway one-carbon metabolism; tetrahydrofolate interconversion. Functionally, catalyzes the oxidation of 5,10-methylenetetrahydrofolate to 5,10-methenyltetrahydrofolate and then the hydrolysis of 5,10-methenyltetrahydrofolate to 10-formyltetrahydrofolate. In Nitrosomonas eutropha (strain DSM 101675 / C91 / Nm57), this protein is Bifunctional protein FolD.